The following is a 220-amino-acid chain: Inner membrane-spanning protein YciB (220 aa).

The next 6 helical transmembrane spans lie at 20–40, 57–77, 86–106, 123–143, 156–176, and 187–207; these read EVPP…FFFA, IGAP…IALA, LPIM…LTLW, LFGA…GYVF, KLTL…EVVW, and FKVW…MPLI.

Belongs to the YciB family.

Its subcellular location is the cell inner membrane. Functionally, plays a role in cell envelope biogenesis, maintenance of cell envelope integrity and membrane homeostasis. This is Inner membrane-spanning protein YciB from Brucella anthropi (strain ATCC 49188 / DSM 6882 / CCUG 24695 / JCM 21032 / LMG 3331 / NBRC 15819 / NCTC 12168 / Alc 37) (Ochrobactrum anthropi).